We begin with the raw amino-acid sequence, 184 residues long: Oligoribonuclease (184 aa).

Positions 9–172 (LIWIDLEMTG…DDIRESIEEL (164 aa)) constitute an Exonuclease domain. Y130 is a catalytic residue.

It belongs to the oligoribonuclease family.

The protein localises to the cytoplasm. Its function is as follows. 3'-to-5' exoribonuclease specific for small oligoribonucleotides. The protein is Oligoribonuclease of Actinobacillus pleuropneumoniae serotype 5b (strain L20).